The following is a 125-amino-acid chain: Large ribosomal subunit protein bL12 (125 aa).

This sequence belongs to the bacterial ribosomal protein bL12 family. Homodimer. Part of the ribosomal stalk of the 50S ribosomal subunit. Forms a multimeric L10(L12)X complex, where L10 forms an elongated spine to which 2 to 4 L12 dimers bind in a sequential fashion. Binds GTP-bound translation factors.

Its function is as follows. Forms part of the ribosomal stalk which helps the ribosome interact with GTP-bound translation factors. Is thus essential for accurate translation. This is Large ribosomal subunit protein bL12 from Helicobacter pylori (strain HPAG1).